We begin with the raw amino-acid sequence, 249 residues long: MTRYKAIISYDGHDFSGFQRQPHARTVQEEIEKTLVRLNSGQPVTVHGAGRTDAGVHAYGQVIHFDLAGSRDVEKLRFALDTQTSEDIDVVSVEQVADDFHCRYAKHSKTYEFLVDIGRPKNPMMRHYATFYPYDLDLSLIEEAIQDLVGTHDFTGFTASGTSVEDKVRTITVASMEYDQQRQFLIFTFSGNGFLYKQVRNMVGTLLKIGNGRMPVGQIKRILAEKDRGLAGPTAAGNGLYLKEIIYED.

The active-site Nucleophile is Asp53. Tyr111 provides a ligand contact to substrate.

Belongs to the tRNA pseudouridine synthase TruA family. Homodimer.

It carries out the reaction uridine(38/39/40) in tRNA = pseudouridine(38/39/40) in tRNA. Formation of pseudouridine at positions 38, 39 and 40 in the anticodon stem and loop of transfer RNAs. This Streptococcus suis (strain 98HAH33) protein is tRNA pseudouridine synthase A.